A 107-amino-acid polypeptide reads, in one-letter code: Nucleoid-associated protein RP866 (107 aa).

This sequence belongs to the YbaB/EbfC family. Homodimer.

The protein localises to the cytoplasm. Its subcellular location is the nucleoid. Functionally, binds to DNA and alters its conformation. May be involved in regulation of gene expression, nucleoid organization and DNA protection. The protein is Nucleoid-associated protein RP866 of Rickettsia prowazekii (strain Madrid E).